We begin with the raw amino-acid sequence, 71 residues long: Small ribosomal subunit protein bS18 (71 aa).

This sequence belongs to the bacterial ribosomal protein bS18 family. In terms of assembly, part of the 30S ribosomal subunit. Forms a tight heterodimer with protein bS6.

Binds as a heterodimer with protein bS6 to the central domain of the 16S rRNA, where it helps stabilize the platform of the 30S subunit. This is Small ribosomal subunit protein bS18 from Thermosynechococcus vestitus (strain NIES-2133 / IAM M-273 / BP-1).